The primary structure comprises 313 residues: C-type lectin domain-containing protein 162 (313 aa).

A signal peptide spans 1–17 (MNIFTLLFIYFLSDTVA). N-linked (GlcNAc...) asparagine glycans are attached at residues Asn-28 and Asn-41. The C-type lectin domain maps to 28 to 145 (NATGCFQFFR…DAMFLPFVCE (118 aa)). A disulfide bridge connects residues Cys-49 and Cys-144. N-linked (GlcNAc...) asparagine glycosylation is present at Asn-213. The disordered stretch occupies residues 244 to 313 (VSQTETEMSR…RSKTIQISRG (70 aa)). Residues 250–259 (EMSRSRKEKE) are compositionally biased toward basic and acidic residues. Residues Asn-279 and Asn-300 are each glycosylated (N-linked (GlcNAc...) asparagine). Over residues 291-304 (SKEKREREENETIR) the composition is skewed to basic and acidic residues.

It is found in the secreted. This chain is C-type lectin domain-containing protein 162 (clec-162), found in Caenorhabditis elegans.